Consider the following 310-residue polypeptide: Tagatose-6-phosphate kinase (310 aa).

It belongs to the carbohydrate kinase PfkB family. LacC subfamily.

It catalyses the reaction D-tagatofuranose 6-phosphate + ATP = D-tagatofuranose 1,6-bisphosphate + ADP + H(+). It participates in carbohydrate metabolism; D-tagatose 6-phosphate degradation; D-glyceraldehyde 3-phosphate and glycerone phosphate from D-tagatose 6-phosphate: step 1/2. In Staphylococcus aureus (strain MRSA252), this protein is Tagatose-6-phosphate kinase.